Reading from the N-terminus, the 75-residue chain is Nigwaprin-a (75 aa).

The N-terminal stretch at 1-24 (MSSGGLLLLLGLLTLWAELTPVSG) is a signal peptide. One can recognise a WAP domain in the interval 27-72 (RPVKPGLCPPRPQKPPCVKECKNDWSCRGEQKCCRYGCIYECRDPI). Cystine bridges form between cysteine 34–cysteine 60, cysteine 43–cysteine 64, cysteine 47–cysteine 59, and cysteine 53–cysteine 68.

This sequence belongs to the venom waprin family. As to expression, expressed by the venom gland.

The protein localises to the secreted. In terms of biological role, damages membranes of susceptible bacteria. Has no hemolytic activity. Not toxic to mice. Does not inhibit the proteinases elastase and cathepsin G. The sequence is that of Nigwaprin-a from Cryptophis nigrescens (Eastern small-eyed snake).